Consider the following 225-residue polypeptide: 7-cyano-7-deazaguanine synthase (225 aa).

10-20 (FSGGQDSTTLA) contributes to the ATP binding site. Cys-190, Cys-205, Cys-208, and Cys-211 together coordinate Zn(2+).

The protein belongs to the QueC family. Zn(2+) serves as cofactor.

The enzyme catalyses 7-carboxy-7-deazaguanine + NH4(+) + ATP = 7-cyano-7-deazaguanine + ADP + phosphate + H2O + H(+). It participates in purine metabolism; 7-cyano-7-deazaguanine biosynthesis. In terms of biological role, catalyzes the ATP-dependent conversion of 7-carboxy-7-deazaguanine (CDG) to 7-cyano-7-deazaguanine (preQ(0)). This chain is 7-cyano-7-deazaguanine synthase, found in Helicobacter pylori (strain J99 / ATCC 700824) (Campylobacter pylori J99).